The following is a 113-amino-acid chain: MQAKAVTKYVRISPTKVRPVMDLVRGKPVDRALAILRYLPHKAAREIARTIESARANATNNYDMAPDALVVKYIFADEGPAFKRIMPRARGRADRIRKRTTHITVIVDDGEEM.

It belongs to the universal ribosomal protein uL22 family. As to quaternary structure, part of the 50S ribosomal subunit.

Functionally, this protein binds specifically to 23S rRNA; its binding is stimulated by other ribosomal proteins, e.g. L4, L17, and L20. It is important during the early stages of 50S assembly. It makes multiple contacts with different domains of the 23S rRNA in the assembled 50S subunit and ribosome. In terms of biological role, the globular domain of the protein is located near the polypeptide exit tunnel on the outside of the subunit, while an extended beta-hairpin is found that lines the wall of the exit tunnel in the center of the 70S ribosome. The polypeptide is Large ribosomal subunit protein uL22 (Roseiflexus castenholzii (strain DSM 13941 / HLO8)).